Consider the following 289-residue polypeptide: Oxaloacetate decarboxylase (289 aa).

Substrate is bound at residue Ser47. Asp85 provides a ligand contact to Mg(2+). Positions 156 and 232 each coordinate substrate.

It belongs to the isocitrate lyase/PEP mutase superfamily. Oxaloacetate decarboxylase family. As to quaternary structure, homotetramer; dimer of dimers. Requires Mg(2+) as cofactor.

It carries out the reaction oxaloacetate + H(+) = pyruvate + CO2. In terms of biological role, catalyzes the decarboxylation of oxaloacetate into pyruvate. Seems to play a role in maintaining cellular concentrations of bicarbonate and pyruvate. The sequence is that of Oxaloacetate decarboxylase from Rhodopseudomonas palustris (strain HaA2).